The sequence spans 181 residues: ATP synthase subunit delta (181 aa).

Belongs to the ATPase delta chain family. F-type ATPases have 2 components, F(1) - the catalytic core - and F(0) - the membrane proton channel. F(1) has five subunits: alpha(3), beta(3), gamma(1), delta(1), epsilon(1). F(0) has three main subunits: a(1), b(2) and c(10-14). The alpha and beta chains form an alternating ring which encloses part of the gamma chain. F(1) is attached to F(0) by a central stalk formed by the gamma and epsilon chains, while a peripheral stalk is formed by the delta and b chains.

The protein resides in the cell membrane. In terms of biological role, f(1)F(0) ATP synthase produces ATP from ADP in the presence of a proton or sodium gradient. F-type ATPases consist of two structural domains, F(1) containing the extramembraneous catalytic core and F(0) containing the membrane proton channel, linked together by a central stalk and a peripheral stalk. During catalysis, ATP synthesis in the catalytic domain of F(1) is coupled via a rotary mechanism of the central stalk subunits to proton translocation. Functionally, this protein is part of the stalk that links CF(0) to CF(1). It either transmits conformational changes from CF(0) to CF(1) or is implicated in proton conduction. In Shouchella clausii (strain KSM-K16) (Alkalihalobacillus clausii), this protein is ATP synthase subunit delta.